The following is a 166-amino-acid chain: Orotate phosphoribosyltransferase (166 aa).

5-phospho-alpha-D-ribose 1-diphosphate contacts are provided by residues Arg-83, Lys-84, His-89, and 109-117 (DDVATTGGS). The orotate site is built by Thr-113 and Arg-141.

This sequence belongs to the purine/pyrimidine phosphoribosyltransferase family. PyrE subfamily. As to quaternary structure, homodimer. Requires Mg(2+) as cofactor.

The catalysed reaction is orotidine 5'-phosphate + diphosphate = orotate + 5-phospho-alpha-D-ribose 1-diphosphate. It participates in pyrimidine metabolism; UMP biosynthesis via de novo pathway; UMP from orotate: step 1/2. Functionally, catalyzes the transfer of a ribosyl phosphate group from 5-phosphoribose 1-diphosphate to orotate, leading to the formation of orotidine monophosphate (OMP). The sequence is that of Orotate phosphoribosyltransferase from Picrophilus torridus (strain ATCC 700027 / DSM 9790 / JCM 10055 / NBRC 100828 / KAW 2/3).